The primary structure comprises 303 residues: MYSCTSPSGIKVSLSTPEIWEEFYPKTEMIVTRNRGRVIFPHLDYIIKGLDPGSLYSIYIHLERVDGIKYKFDAGEWKEFAKGDPILPIQYKEHPRGKRTGAEWMSEPVSFAHIKITNNPEIKDQKVILVQSMHKHIPVVTVKQVRHYKTGYQEDFSGEQFRLEATEFMVVTAYQNEILKNLKVHHNKFASGFRSNGKRRLSSDSENSENSPPKRSKLVTPPTISPQIDLPQQTPYYFNQNFVAPQNYQPQFASAQNYNFEVQNNAQLAWNMYYQKQYEFWWQQQQMMMPGQPQELKNEFQSL.

Positions 14–195 (LSTPEIWEEF…HNKFASGFRS (182 aa)) form a DNA-binding region, T-box. A disordered region spans residues 193 to 225 (FRSNGKRRLSSDSENSENSPPKRSKLVTPPTIS). Residues 204–213 (DSENSENSPP) are compositionally biased toward low complexity.

Its subcellular location is the nucleus. Transcription factor. Required for mesodermal induction, acting redundantly with transcription factor tbx-37. Together with tbx-37, acts by inducing cell fates in the AB lineage, thereby playing a role in development of the anterior pharynx. In Caenorhabditis elegans, this protein is T-box protein 38 (tbx-38).